Reading from the N-terminus, the 143-residue chain is uncharacterized protein (143 aa).

Positions 13–143 (SLQFPHHRPG…QDAAHQCRIQ (131 aa)) are disordered. A compositionally biased stretch (basic residues) spans 17–31 (PHHRPGLRRHRKNTT). 3 stretches are compositionally biased toward basic and acidic residues: residues 35-48 (AAVD…RGDA), 84-96 (DGRE…AEEK), and 112-133 (EKQH…DHAG). Low complexity predominate over residues 134–143 (QDAAHQCRIQ).

This is an uncharacterized protein from Homo sapiens (Human).